The primary structure comprises 210 residues: Thymidylate kinase (210 aa).

10–17 is an ATP binding site; it reads GLEGAGKS.

Belongs to the thymidylate kinase family.

It catalyses the reaction dTMP + ATP = dTDP + ADP. Its function is as follows. Phosphorylation of dTMP to form dTDP in both de novo and salvage pathways of dTTP synthesis. In Hamiltonella defensa subsp. Acyrthosiphon pisum (strain 5AT), this protein is Thymidylate kinase.